The following is a 186-amino-acid chain: Large ribosomal subunit protein uL5 (186 aa).

It belongs to the universal ribosomal protein uL5 family. Part of the 50S ribosomal subunit; part of the 5S rRNA/L5/L18/L25 subcomplex. Contacts the 5S rRNA and the P site tRNA. Forms a bridge to the 30S subunit in the 70S ribosome.

Its function is as follows. This is one of the proteins that bind and probably mediate the attachment of the 5S RNA into the large ribosomal subunit, where it forms part of the central protuberance. In the 70S ribosome it contacts protein S13 of the 30S subunit (bridge B1b), connecting the 2 subunits; this bridge is implicated in subunit movement. Contacts the P site tRNA; the 5S rRNA and some of its associated proteins might help stabilize positioning of ribosome-bound tRNAs. This is Large ribosomal subunit protein uL5 from Ruegeria pomeroyi (strain ATCC 700808 / DSM 15171 / DSS-3) (Silicibacter pomeroyi).